We begin with the raw amino-acid sequence, 281 residues long: Bifunctional N-acyl-homoserine lactone acylase/prephenate dehydratase (281 aa).

Residues 6-181 enclose the Prephenate dehydratase domain; it reads IIAFQGRPGA…NTTRFYIASR (176 aa). Positions 196–273 constitute an ACT domain; sequence TLLFRVNNQP…EQQEILGVYP (78 aa). Positions 207, 208, 221, and 222 each coordinate L-phenylalanine.

In terms of assembly, homodimer.

It catalyses the reaction an N-acyl-L-homoserine lactone + H2O = L-homoserine lactone + a carboxylate. The catalysed reaction is prephenate + H(+) = 3-phenylpyruvate + CO2 + H2O. The protein operates within amino-acid biosynthesis; L-phenylalanine biosynthesis; phenylpyruvate from prephenate: step 1/1. Multifunctional enzyme that acts on N-acyl-homoserine lactones (AHLs), beta-lactam antibiotics and shows prephenate dehydratase activity. Acts as an acylase on AHL and hydrolyzes the amide bond of the acyl side-chain of AHL molecules, releasing homoserine lactone (HSL) and the fatty acid. Can use different 3-oxo-acyl homoserine lactones, such as 3-oxo-decanoyl homoserine lactone, which is the preferred substrate, 3-oxo-octanoyl homoserine lactone, 3-oxo-hexanoyl homoserine lactone and 3-oxo-dodecanoyl homoserine lactone. It can also degrade various beta-lactam antibiotics, including penicillin G, amoxicillin and ampicillin, but not cefotaxime. In addition, it can complement a phenylalanine auxotrophic E.coli mutant, which carries a kanamycin gene inserted into pheA, suggesting that GqqA can also function as a prephenate dehydratase. Involved in bacterial quorum quenching (QQ) and cellulose biofilm formation. This is Bifunctional N-acyl-homoserine lactone acylase/prephenate dehydratase from Komagataeibacter europaeus (Gluconacetobacter europaeus).